Consider the following 334-residue polypeptide: Aspartate carbamoyltransferase catalytic subunit (334 aa).

Carbamoyl phosphate contacts are provided by Arg-71 and Thr-72. L-aspartate is bound at residue Lys-99. Carbamoyl phosphate-binding residues include Arg-121, His-151, and Gln-154. Positions 184 and 239 each coordinate L-aspartate. Carbamoyl phosphate contacts are provided by Gly-280 and Pro-281.

It belongs to the aspartate/ornithine carbamoyltransferase superfamily. ATCase family. Heterododecamer (2C3:3R2) of six catalytic PyrB chains organized as two trimers (C3), and six regulatory PyrI chains organized as three dimers (R2).

The catalysed reaction is carbamoyl phosphate + L-aspartate = N-carbamoyl-L-aspartate + phosphate + H(+). It participates in pyrimidine metabolism; UMP biosynthesis via de novo pathway; (S)-dihydroorotate from bicarbonate: step 2/3. Its function is as follows. Catalyzes the condensation of carbamoyl phosphate and aspartate to form carbamoyl aspartate and inorganic phosphate, the committed step in the de novo pyrimidine nucleotide biosynthesis pathway. The polypeptide is Aspartate carbamoyltransferase catalytic subunit (Pseudomonas syringae pv. tomato (strain ATCC BAA-871 / DC3000)).